A 651-amino-acid polypeptide reads, in one-letter code: MSGELNGNDTSAQAAVSAGSVLEGAAFADEGEQHNESMKTLVLGALGVVYGDIGTSPIYAFREALHAAATNGILARSDILGVVSLIFWALTLVVTVKYVLFVLRADNNGEGGILSLMALVRGALKGRPDLILGVGICGAALFFGDAVITPAISVLSAMEGLEIVAPNLTPFVVPATVVILVTLFSVQKLGTGRVAIVFGPIMALWFVALGASGLWHIFDDPTVMAALNPYYAVRFLTVSPAVAFVTVGAVFLAMTGAEALYADLGHFGRKPIVRAWLWIVFPCLLLNYFGQAAFILSHGEAAALPFFQMIPSFALWPMVLLATAATVIASQAVITGAYSVARQAVQLNILPRLEIQHTSEKLHGQIYIPRVNLLLGLAVVILVLGFEKSSNLAAAYGIAVTGNMLVTTVLLYIVMTRIWNWRVSRALPIILGFLVIDMLFFSANIIKVHEGGWASIGIATVLVLIMWTWVRGTRHLFQKTRKAEVPLDLIVEQMAKRPPTIVPGTAVFLTGDPKSAPTALMHSLKHYKVLHENNVILTVVTASKPWVASADRARVSQYNERFMLVTLTFGYMQQPNILRALGLCRRLGWKFDIMTTSFFLSRRSLKASVHSGMPLWQDKLFILLARTASDATEYFQIPTGRVVEIGTQVNI.

The next 12 helical transmembrane spans lie at 41-61, 82-102, 130-150, 163-183, 194-214, 235-255, 276-296, 309-329, 366-386, 395-415, 426-446, and 450-470; these read LVLG…IYAF, VVSL…VLFV, LILG…VITP, IVAP…LVTL, VAIV…ASGL, FLTV…LAMT, WLWI…AFIL, MIPS…TVIA, IYIP…VLGF, AYGI…YIVM, ALPI…ANII, and EGGW…WTWV.

It belongs to the HAK/KUP transporter (TC 2.A.72) family.

Its subcellular location is the cell inner membrane. It catalyses the reaction K(+)(in) + H(+)(in) = K(+)(out) + H(+)(out). In terms of biological role, transport of potassium into the cell. Likely operates as a K(+):H(+) symporter. This chain is Probable potassium transport system protein Kup, found in Brucella canis (strain ATCC 23365 / NCTC 10854 / RM-666).